Reading from the N-terminus, the 293-residue chain is MPELPEVETVRRGLQPFMEGATVVRVEQNRPDLRFAFPENFAERLSGRRIEALGRRAKYLTVHLDDGLSIISHLGMSGSFRIEAEDAQGLPGGFHHERSKNSLHDHVVFHLMRSDGASARIIYNDPRRFGFMLFAEKGALEEHPLLKDLGVEPTGNLLSGEVLAALFKGRRTPLKAALLDQRLIAGLGNIYVCEALWRAGLSPMRAAGSVAGEMDVMERLAGAIRSVIAQAIAAGGSSLKDYIQADGALGYFQHSFSVYGREGKPCRNPACGGTVERVVQSGRSTFFCASCQT.

P2 functions as the Schiff-base intermediate with DNA in the catalytic mechanism. E3 acts as the Proton donor in catalysis. The active-site Proton donor; for beta-elimination activity is the K58. Positions 104, 127, and 170 each coordinate DNA. The FPG-type zinc finger occupies 257-293 (SVYGREGKPCRNPACGGTVERVVQSGRSTFFCASCQT). R283 functions as the Proton donor; for delta-elimination activity in the catalytic mechanism.

It belongs to the FPG family. Monomer. Zn(2+) serves as cofactor.

It carries out the reaction Hydrolysis of DNA containing ring-opened 7-methylguanine residues, releasing 2,6-diamino-4-hydroxy-5-(N-methyl)formamidopyrimidine.. The catalysed reaction is 2'-deoxyribonucleotide-(2'-deoxyribose 5'-phosphate)-2'-deoxyribonucleotide-DNA = a 3'-end 2'-deoxyribonucleotide-(2,3-dehydro-2,3-deoxyribose 5'-phosphate)-DNA + a 5'-end 5'-phospho-2'-deoxyribonucleoside-DNA + H(+). Its function is as follows. Involved in base excision repair of DNA damaged by oxidation or by mutagenic agents. Acts as a DNA glycosylase that recognizes and removes damaged bases. Has a preference for oxidized purines, such as 7,8-dihydro-8-oxoguanine (8-oxoG). Has AP (apurinic/apyrimidinic) lyase activity and introduces nicks in the DNA strand. Cleaves the DNA backbone by beta-delta elimination to generate a single-strand break at the site of the removed base with both 3'- and 5'-phosphates. This is Formamidopyrimidine-DNA glycosylase from Brucella ovis (strain ATCC 25840 / 63/290 / NCTC 10512).